The sequence spans 578 residues: Protein SIA1 (578 aa).

A signal peptide spans 1–28; the sequence is MFRNRRILLYARRFFLVWICFLFITSWS.

Functionally, may be involved in the activation of the plasma membrane proton-ATPase by glucose. This Kluyveromyces lactis (strain ATCC 8585 / CBS 2359 / DSM 70799 / NBRC 1267 / NRRL Y-1140 / WM37) (Yeast) protein is Protein SIA1 (SIA1).